A 173-amino-acid polypeptide reads, in one-letter code: Alpha-crystallin A chain (173 aa).

An N-acetylmethionine modification is found at methionine 1. The tract at residues 1–63 (MDIAIQHPWF…RTVLDSGISE (63 aa)) is required for complex formation with BFSP1 and BFSP2. At glutamine 6 the chain carries Deamidated glutamine; partial. A Phosphoserine modification is found at serine 45. A Deamidated glutamine; partial modification is found at glutamine 50. Positions 52–162 (LFRTVLDSGI…GHSERAIPVS (111 aa)) constitute a sHSP domain. Lysine 70 carries the post-translational modification N6-acetyllysine. The residue at position 90 (glutamine 90) is a Deamidated glutamine; partial. Residue lysine 99 is modified to N6-acetyllysine. Position 100 (histidine 100) interacts with Zn(2+). The residue at position 101 (asparagine 101) is a Deamidated asparagine; partial. 2 residues coordinate Zn(2+): glutamate 102 and histidine 107. Residue serine 122 is modified to Phosphoserine. Asparagine 123 bears the Deamidated asparagine; partial mark. Positions 144-173 (PKVPSGVDAGHSERAIPVSREEKPSSAPSS) are disordered. Residues 153 to 167 (GHSERAIPVSREEKP) show a composition bias toward basic and acidic residues. Position 154 (histidine 154) interacts with Zn(2+). A glycan (O-linked (GlcNAc) serine) is linked at serine 162.

Belongs to the small heat shock protein (HSP20) family. Heteromer composed of three CRYAA and one CRYAB subunits. Inter-subunit bridging via zinc ions enhances stability, which is crucial as there is no protein turn over in the lens. Can also form homodimers and homotetramers (dimers of dimers) which serve as the building blocks of homooligomers. Within homooligomers, the zinc-binding motif is created from residues of 3 different molecules. His-100 and Glu-102 from one molecule are ligands of the zinc ion, and His-107 and His-154 residues from additional molecules complete the site with tetrahedral coordination geometry. Part of a complex required for lens intermediate filament formation composed of BFSP1, BFSP2 and CRYAA. In terms of processing, acetylation at Lys-70 may increase chaperone activity. Undergoes age-dependent proteolytical cleavage at the C-terminus.

It localises to the cytoplasm. Its subcellular location is the nucleus. Its function is as follows. Contributes to the transparency and refractive index of the lens. Acts as a chaperone, preventing aggregation of various proteins under a wide range of stress conditions. Required for the correct formation of lens intermediate filaments as part of a complex composed of BFSP1, BFSP2 and CRYAA. This Pteropus poliocephalus (Grey-headed flying fox) protein is Alpha-crystallin A chain (CRYAA).